A 478-amino-acid polypeptide reads, in one-letter code: NADH-ubiquinone oxidoreductase 49 kDa subunit, mitochondrial (478 aa).

The transit peptide at 1-42 directs the protein to the mitochondrion; sequence MATTLFRLAGRNAKRHCMRQSTTIAHNLNSTRAFSASALRRY. 3 residues coordinate [4Fe-4S] cluster: C341, C347, and C362.

This sequence belongs to the complex I 49 kDa subunit family. In terms of assembly, complex I is composed of about 40 different subunits. Requires [4Fe-4S] cluster as cofactor.

It localises to the mitochondrion inner membrane. It carries out the reaction a ubiquinone + NADH + 5 H(+)(in) = a ubiquinol + NAD(+) + 4 H(+)(out). Its function is as follows. Core subunit of the mitochondrial membrane respiratory chain NADH dehydrogenase (Complex I) that is believed to belong to the minimal assembly required for catalysis. Complex I functions in the transfer of electrons from NADH to the respiratory chain. The immediate electron acceptor for the enzyme is believed to be ubiquinone. The chain is NADH-ubiquinone oxidoreductase 49 kDa subunit, mitochondrial (nuo-49) from Neurospora crassa (strain ATCC 24698 / 74-OR23-1A / CBS 708.71 / DSM 1257 / FGSC 987).